Reading from the N-terminus, the 364-residue chain is Protein RecA (364 aa).

ATP is bound at residue 77 to 84; it reads GPESSGKT. Positions 343–364 are disordered; that stretch reads DRFLQNGGPDPDDGDGDATAEM. The segment covering 352–364 has biased composition (acidic residues); sequence DPDDGDGDATAEM.

It belongs to the RecA family.

Its subcellular location is the cytoplasm. In terms of biological role, can catalyze the hydrolysis of ATP in the presence of single-stranded DNA, the ATP-dependent uptake of single-stranded DNA by duplex DNA, and the ATP-dependent hybridization of homologous single-stranded DNAs. It interacts with LexA causing its activation and leading to its autocatalytic cleavage. The sequence is that of Protein RecA from Rhizobium johnstonii (strain DSM 114642 / LMG 32736 / 3841) (Rhizobium leguminosarum bv. viciae).